A 365-amino-acid polypeptide reads, in one-letter code: Histidine biosynthesis bifunctional protein HisB (365 aa).

Positions 1–176 (MTQQPTLFID…VADPKGLGQP (176 aa)) are histidinol-phosphatase. Catalysis depends on Asp10, which acts as the Nucleophile. Mg(2+) is bound by residues Asp10 and Asp12. Asp12 functions as the Proton donor in the catalytic mechanism. Residues Cys93, His95, Cys101, and Cys103 each coordinate Zn(2+). Asp130 serves as a coordination point for Mg(2+). The segment at 177-365 (RHAVVARKTK…NEMPSSKGVL (189 aa)) is imidazoleglycerol-phosphate dehydratase.

It in the N-terminal section; belongs to the histidinol-phosphatase family. The protein in the C-terminal section; belongs to the imidazoleglycerol-phosphate dehydratase family. It depends on Mg(2+) as a cofactor. Zn(2+) serves as cofactor.

It is found in the cytoplasm. It catalyses the reaction D-erythro-1-(imidazol-4-yl)glycerol 3-phosphate = 3-(imidazol-4-yl)-2-oxopropyl phosphate + H2O. The catalysed reaction is L-histidinol phosphate + H2O = L-histidinol + phosphate. Its pathway is amino-acid biosynthesis; L-histidine biosynthesis; L-histidine from 5-phospho-alpha-D-ribose 1-diphosphate: step 6/9. It functions in the pathway amino-acid biosynthesis; L-histidine biosynthesis; L-histidine from 5-phospho-alpha-D-ribose 1-diphosphate: step 8/9. This is Histidine biosynthesis bifunctional protein HisB from Mannheimia succiniciproducens (strain KCTC 0769BP / MBEL55E).